Here is a 376-residue protein sequence, read N- to C-terminus: Putative phosphoserine aminotransferase (376 aa).

The tract at residues 1 to 30 (MADQLTPSLDIPAALKPRDGRFGSGPSKVR) is disordered. Arg50 serves as a coordination point for L-glutamate. Residues 84 to 85 (AT), Phe108, Thr154, Asp176, and Gln199 each bind pyridoxal 5'-phosphate. At Lys200 the chain carries N6-(pyridoxal phosphate)lysine. Residue 251–252 (NT) coordinates pyridoxal 5'-phosphate.

It belongs to the class-V pyridoxal-phosphate-dependent aminotransferase family. SerC subfamily. In terms of assembly, homodimer. It depends on pyridoxal 5'-phosphate as a cofactor.

It is found in the cytoplasm. The catalysed reaction is O-phospho-L-serine + 2-oxoglutarate = 3-phosphooxypyruvate + L-glutamate. The enzyme catalyses 4-(phosphooxy)-L-threonine + 2-oxoglutarate = (R)-3-hydroxy-2-oxo-4-phosphooxybutanoate + L-glutamate. Its pathway is amino-acid biosynthesis; L-serine biosynthesis; L-serine from 3-phospho-D-glycerate: step 2/3. It functions in the pathway cofactor biosynthesis; pyridoxine 5'-phosphate biosynthesis; pyridoxine 5'-phosphate from D-erythrose 4-phosphate: step 3/5. Functionally, catalyzes the reversible conversion of 3-phosphohydroxypyruvate to phosphoserine and of 3-hydroxy-2-oxo-4-phosphonooxybutanoate to phosphohydroxythreonine. The protein is Putative phosphoserine aminotransferase of Mycobacterium leprae (strain TN).